Reading from the N-terminus, the 180-residue chain is Cytidylate kinase (180 aa).

7 to 15 provides a ligand contact to ATP; it reads GLPGSGTTT.

Belongs to the cytidylate kinase family. Type 2 subfamily.

It localises to the cytoplasm. The enzyme catalyses CMP + ATP = CDP + ADP. It carries out the reaction dCMP + ATP = dCDP + ADP. This Methanosarcina acetivorans (strain ATCC 35395 / DSM 2834 / JCM 12185 / C2A) protein is Cytidylate kinase.